The following is a 180-amino-acid chain: UPF0227 protein YcfP (180 aa).

The protein belongs to the UPF0227 family.

The polypeptide is UPF0227 protein YcfP (Salmonella agona (strain SL483)).